The sequence spans 261 residues: Undecaprenyl-diphosphatase (261 aa).

7 helical membrane passes run 38–58, 75–95, 106–126, 136–156, 181–201, 217–237, and 241–261; these read RSDF…TFVF, RDYV…GLAV, IQPI…AESV, VTWS…VFPG, FSFL…CFEL, VAFV…LGYI, and SFAP…TWLT.

The protein belongs to the UppP family.

The protein resides in the cell inner membrane. It catalyses the reaction di-trans,octa-cis-undecaprenyl diphosphate + H2O = di-trans,octa-cis-undecaprenyl phosphate + phosphate + H(+). Catalyzes the dephosphorylation of undecaprenyl diphosphate (UPP). Confers resistance to bacitracin. The protein is Undecaprenyl-diphosphatase of Xylella fastidiosa (strain Temecula1 / ATCC 700964).